The primary structure comprises 249 residues: Small ribosomal subunit protein eS6 (249 aa).

Lys-14 participates in a covalent cross-link: Glycyl lysine isopeptide (Lys-Gly) (interchain with G-Cter in SUMO2). At Glu-35 the chain carries ADP-ribosyl glutamic acid. Residue Arg-137 is modified to (3R)-3-hydroxyarginine. Ser-148 carries the phosphoserine modification. Lys-211 carries the post-translational modification N6-acetyllysine. Residues Met-217–Ala-229 show a composition bias toward basic and acidic residues. Residues Met-217–Lys-249 are disordered. Ser-235 and Ser-236 each carry phosphoserine; by RPS6KA1, RPS6KA3, DAPK1 and PASK. The span at Ser-236–Lys-249 shows a compositional bias: low complexity. Ser-240, Ser-242, Ser-244, and Ser-247 each carry phosphoserine.

It belongs to the eukaryotic ribosomal protein eS6 family. As to quaternary structure, component of the small ribosomal subunit. Part of the small subunit (SSU) processome, composed of more than 70 proteins and the RNA chaperone small nucleolar RNA (snoRNA) U3. Post-translationally, ribosomal protein S6 is the major substrate of protein kinases in eukaryote ribosomes. The phosphorylation is stimulated by growth factors, tumor promoting agents, and mitogens. It is dephosphorylated at growth arrest. Phosphorylated at Ser-235 and Ser-236 by RPS6KA1 and RPS6KA3; phosphorylation at these sites facilitates the assembly of the pre-initiation complex. In terms of processing, specifically hydroxylated (with R stereochemistry) at C-3 of Arg-137 by KDM8. Mono-ADP-ribosylation at Glu-35 by PARP16 inhibits polysome assembly and mRNA loading, thereby inhibiting protein translation.

The protein resides in the cytoplasm. Its subcellular location is the nucleus. The protein localises to the nucleolus. Component of the 40S small ribosomal subunit. Plays an important role in controlling cell growth and proliferation through the selective translation of particular classes of mRNA. Part of the small subunit (SSU) processome, first precursor of the small eukaryotic ribosomal subunit. During the assembly of the SSU processome in the nucleolus, many ribosome biogenesis factors, an RNA chaperone and ribosomal proteins associate with the nascent pre-rRNA and work in concert to generate RNA folding, modifications, rearrangements and cleavage as well as targeted degradation of pre-ribosomal RNA by the RNA exosome. The chain is Small ribosomal subunit protein eS6 (RPS6) from Bos taurus (Bovine).